Consider the following 210-residue polypeptide: Mitochondrial cardiolipin hydrolase (210 aa).

The Mitochondrial intermembrane portion of the chain corresponds to 1-6 (MLLWGR). Residues 7–24 (WKVVAGLAGLALSLELLL) traverse the membrane as a helical segment. Topologically, residues 25–210 (RYMRRRKPIR…YDFFPEKENK (186 aa)) are cytoplasmic. A PLD phosphodiesterase domain is found at 138–165 (SSGYMHHKFAVVDGTVVLTGSLNWTVQA). Residues His143, Lys145, and Asp150 contribute to the active site.

Belongs to the phospholipase D family. MitoPLD/Zucchini subfamily. In terms of assembly, homodimer.

It is found in the mitochondrion outer membrane. The catalysed reaction is a cardiolipin + H2O = a 1,2-diacyl-sn-glycero-3-phospho-(1'-sn-glycerol) + a 1,2-diacyl-sn-glycero-3-phosphate + H(+). Presents phospholipase and nuclease activities, depending on the different physiological conditions. Plays a key role in mitochondrial fusion and fission via its phospholipase activity. In its phospholipase role, it uses the mitochondrial lipid cardiolipin as substrate to generate phosphatidate (PA or 1,2-diacyl-sn-glycero-3-phosphate), a second messenger signaling lipid. Production of PA facilitates Mitofusin-mediated fusion, whereas the cleavage of PA by the Lipin family of phosphatases produces diacylgycerol (DAG) which promotes mitochondrial fission. Regulates mitochondrial shape through facilitating mitochondrial fusion. During spermatogenesis, plays a critical role in PIWI-interacting RNA (piRNA) biogenesis. piRNAs provide essential protection against the activity of mobile genetic elements. piRNA-mediated transposon silencing is thus critical for maintaining genome stability, in particular in germline cells when transposons are mobilized as a consequence of wide-spread genomic demethylation. Has been shown to be a backbone-non-specific, single strand-specific nuclease, cleaving either RNA or DNA substrates with similar affinity. Produces 5' phosphate and 3' hydroxyl termini, suggesting it could directly participate in the processing of primary piRNA transcripts. Has been proposed to act as a cardiolipin hydrolase to generate phosphatidic acid at mitochondrial surface. Although it cannot be excluded that it can act as a phospholipase in some circumstances, this activity could not be confirmed. In Xenopus tropicalis (Western clawed frog), this protein is Mitochondrial cardiolipin hydrolase (pld6).